The following is a 160-amino-acid chain: Glutathione peroxidase homolog BsaA (160 aa).

Cys-35 is an active-site residue.

This sequence belongs to the glutathione peroxidase family.

This chain is Glutathione peroxidase homolog BsaA (bsaA), found in Bacillus subtilis (strain 168).